The primary structure comprises 104 residues: Ig lambda-2 chain C region (104 aa).

The Ig-like domain occupies Pro-6–Ser-99. A disulfide bond links Cys-27 and Cys-85.

This is Ig lambda-2 chain C region from Rattus norvegicus (Rat).